Consider the following 461-residue polypeptide: V-type ATP synthase beta chain (461 aa).

This sequence belongs to the ATPase alpha/beta chains family.

Produces ATP from ADP in the presence of a proton gradient across the membrane. The V-type beta chain is a regulatory subunit. The chain is V-type ATP synthase beta chain from Clostridium botulinum (strain Kyoto / Type A2).